Reading from the N-terminus, the 591-residue chain is Aspartate--tRNA(Asp/Asn) ligase (591 aa).

E170 contacts L-aspartate. Residues 194 to 197 (QLFK) are aspartate. R216 contacts L-aspartate. Residues 216-218 (RDE) and Q225 each bind ATP. An L-aspartate-binding site is contributed by H448. Residue E482 participates in ATP binding. L-aspartate is bound at residue R489. 534 to 537 (GWDR) serves as a coordination point for ATP. Positions 559–591 (GGVDPLTDAPAPITEQQRKESGIDVKPEPSKPH) are disordered. The segment covering 574–591 (QQRKESGIDVKPEPSKPH) has biased composition (basic and acidic residues).

Belongs to the class-II aminoacyl-tRNA synthetase family. Type 1 subfamily. In terms of assembly, homodimer.

It localises to the cytoplasm. It catalyses the reaction tRNA(Asx) + L-aspartate + ATP = L-aspartyl-tRNA(Asx) + AMP + diphosphate. In terms of biological role, aspartyl-tRNA synthetase with relaxed tRNA specificity since it is able to aspartylate not only its cognate tRNA(Asp) but also tRNA(Asn). Reaction proceeds in two steps: L-aspartate is first activated by ATP to form Asp-AMP and then transferred to the acceptor end of tRNA(Asp/Asn). The polypeptide is Aspartate--tRNA(Asp/Asn) ligase (Mycobacterium avium (strain 104)).